We begin with the raw amino-acid sequence, 229 residues long: MAEEMESSLEASFSSSGAVSGASGFLPPARSRIFKIIVIGDSNVGKTCLTYRFCAGRFPDRTEATIGVDFRERAVEIDGERIKIQLWDTAGQERFRKSMVQHYYRNVHAVVFVYDMTNMASFHSLPSWIEECKQHLLASDIPRILVGNKCDLRSAIQVPTDLAQKFADTHSMPLFETSAKNPNDNDHVEAIFMTLAHKLKSHKPLMLSQPPDNGIILKPEPKPAMTCWC.

Residues Asn43, Val44, Gly45, Lys46, Thr47, Cys48, Thr62, and Thr65 each coordinate GTP. Thr47 contributes to the Mg(2+) binding site. The Switch 1 motif lies at 56–68 (GRFPDRTEATIGV). Residues Thr65 and Asp88 each coordinate Mg(2+). A Switch 2 motif is present at residues 89–108 (TAGQERFRKSMVQHYYRNVH). Positions 91, 148, 149, 151, 179, and 180 each coordinate GTP. S-geranylgeranyl cysteine attachment occurs at residues Cys227 and Cys229. A Cysteine methyl ester modification is found at Cys229.

The protein belongs to the small GTPase superfamily. Rab family. Interacts (GTP- and GDP-bound forms) with ATG16L1; the complex consists of a tetramer where two RAB33B molecules bind independently one molecule of the ATG16L1 homodimer; the interaction promotes ATG12-ATG5-ATG16L1 complex recruitment to phagophores. Interacts with ATG16L2; however interaction is approximately hundred times lower than for ATG16L1. Interacts with RIC1 (via C-terminus domain); the interaction is direct with a preference for RAB33B-GTP. Interacts with RGP1. Requires Mg(2+) as cofactor. Post-translationally, prenylated.

It is found in the golgi apparatus membrane. Its subcellular location is the golgi apparatus. It localises to the cis-Golgi network. The protein resides in the preautophagosomal structure membrane. It carries out the reaction GTP + H2O = GDP + phosphate + H(+). With respect to regulation, regulated by guanine nucleotide exchange factors (GEFs) which promote the exchange of bound GDP for free GTP. Regulated by GTPase activating proteins (GAPs) such as SGSM2 which increase the GTP hydrolysis activity. Inhibited by GDP dissociation inhibitors (GDIs). Functionally, the small GTPases Rab are key regulators of intracellular membrane trafficking, from the formation of transport vesicles to their fusion with membranes. Rabs cycle between an inactive GDP-bound form and an active GTP-bound form that is able to recruit to membranes different sets of downstream effectors directly responsible for vesicle formation, movement, tethering and fusion. RAB33B acts, in coordination with RAB6A, to regulate intra-Golgi retrograde trafficking. Participates in autophagosome formation by recruiting the ATG12-ATG5-ATG16L1 complex to phagophores, probably in a nucleotide-independent manner. This is Ras-related protein Rab-33B (RAB33B) from Pongo abelii (Sumatran orangutan).